The primary structure comprises 218 residues: Heart- and neural crest derivatives-expressed protein 1 (218 aa).

Disordered stretches follow at residues 1 to 23 (MNLVGSYAHHHHHHHHHHPHPAH), 56 to 112 (APDF…RTES), and 172 to 203 (ADGGRESKRKRELQQHEGFPPALGPGEKRIKG). Over residues 8–21 (AHHHHHHHHHHPHP) the composition is skewed to basic residues. Low complexity predominate over residues 68 to 92 (AAAAAASYGPDARPGQSPGRLEALG). Positions 95–107 (LGRRKGSGPKKER) are enriched in basic residues. Residues 97-149 (RRKGSGPKKERRRTESINSAFAELRECIPNVPADTKLSKIKTLRLATSYIAYL) enclose the bHLH domain. Threonine 110 carries the post-translational modification Phosphothreonine; by PLK4. Residue serine 112 is modified to Phosphoserine; by PLK4.

As to quaternary structure, efficient DNA binding requires dimerization with another bHLH protein. Forms homodimers and heterodimers with TCF3 gene products E12 and E47, HAND2 and HEY1, HEY2 and HEYL (hairy-related transcription factors). Interacts with MDFIC. Interacts with SOX15; the interaction enhances HAND1-induced differentiation of trophoblast giant cells. Post-translationally, phosphorylation by PLK4 disrupts the interaction with MDFIC and leads to translocation into the nucleoplasm, allowing dimerization and transcription factor activity.

Its subcellular location is the nucleus. The protein localises to the nucleoplasm. It is found in the nucleolus. In terms of biological role, transcription factor that plays an essential role in both trophoblast giant cell differentiation and in cardiac morphogenesis. Binds the DNA sequence 5'-NRTCTG-3' (non-canonical E-box). Acts as a transcriptional repressor of SOX15. In the adult, could be required for ongoing expression of cardiac-specific genes. The protein is Heart- and neural crest derivatives-expressed protein 1 (HAND1) of Bos taurus (Bovine).